We begin with the raw amino-acid sequence, 239 residues long: MAKLGVNIDHVATIRQARGGVEPDPVAAAALAELAGADGITIHLREDRRHIQDRDLKLLRQTVKTKLNLEMAATAEMVAIALSVKPDMCTLVPEKRQELTTEGGLDVRIAMQGIAEAVERLQNGGIAVSLFVDPDPDQVKASSKVGSDYIEIHTGAFADAKDWKSEQDELERIGNAIKLGAKLGLGINAGHGLNYTNIRKVAALGGIEEYNIGHSIISRAVLVGLDRAVRDMVDLIKYA.

N7 provides a ligand contact to 3-amino-2-oxopropyl phosphate. A 1-deoxy-D-xylulose 5-phosphate-binding site is contributed by 9–10 (DH). A 3-amino-2-oxopropyl phosphate-binding site is contributed by R18. Residue H43 is the Proton acceptor of the active site. 1-deoxy-D-xylulose 5-phosphate-binding residues include R45 and H50. Residue E70 is the Proton acceptor of the active site. T100 lines the 1-deoxy-D-xylulose 5-phosphate pocket. H191 (proton donor) is an active-site residue. 3-amino-2-oxopropyl phosphate-binding positions include G192 and 213–214 (GH).

This sequence belongs to the PNP synthase family. As to quaternary structure, homooctamer; tetramer of dimers.

It localises to the cytoplasm. The catalysed reaction is 3-amino-2-oxopropyl phosphate + 1-deoxy-D-xylulose 5-phosphate = pyridoxine 5'-phosphate + phosphate + 2 H2O + H(+). It functions in the pathway cofactor biosynthesis; pyridoxine 5'-phosphate biosynthesis; pyridoxine 5'-phosphate from D-erythrose 4-phosphate: step 5/5. Its function is as follows. Catalyzes the complicated ring closure reaction between the two acyclic compounds 1-deoxy-D-xylulose-5-phosphate (DXP) and 3-amino-2-oxopropyl phosphate (1-amino-acetone-3-phosphate or AAP) to form pyridoxine 5'-phosphate (PNP) and inorganic phosphate. This Geobacter metallireducens (strain ATCC 53774 / DSM 7210 / GS-15) protein is Pyridoxine 5'-phosphate synthase.